The chain runs to 253 residues: Zinc import ATP-binding protein ZnuC (253 aa).

Residues 6–227 (VTLNKISVTF…FGNRGAEQLA (222 aa)) enclose the ABC transporter domain. 38-45 (GPNGAGKS) contacts ATP.

Belongs to the ABC transporter superfamily. Zinc importer (TC 3.A.1.15.5) family. The complex is composed of two ATP-binding proteins (ZnuC), two transmembrane proteins (ZnuB) and a solute-binding protein (ZnuA).

It is found in the cell inner membrane. The catalysed reaction is Zn(2+)(out) + ATP(in) + H2O(in) = Zn(2+)(in) + ADP(in) + phosphate(in) + H(+)(in). Functionally, part of the ABC transporter complex ZnuABC involved in zinc import. Responsible for energy coupling to the transport system. The sequence is that of Zinc import ATP-binding protein ZnuC from Yersinia pseudotuberculosis serotype I (strain IP32953).